The sequence spans 164 residues: FMN reductase (NADH) RutF (164 aa).

Belongs to the non-flavoprotein flavin reductase family. RutF subfamily.

The catalysed reaction is FMNH2 + NAD(+) = FMN + NADH + 2 H(+). Its function is as follows. Catalyzes the reduction of FMN to FMNH2 which is used to reduce pyrimidine by RutA via the Rut pathway. This is FMN reductase (NADH) RutF from Escherichia coli (strain K12 / MC4100 / BW2952).